We begin with the raw amino-acid sequence, 397 residues long: t-SNARE affecting a late Golgi compartment protein 2 (397 aa).

Residues 1 to 317 (MFRDRTNLFL…HYQKRTQKCK (317 aa)) lie on the Cytoplasmic side of the membrane. Residues 74 to 96 (DIAQDVDDYLLEVRRLSEQLAKV) are a coiled coil. A Phosphoserine modification is found at Ser109. Positions 244-306 (EAYLRERDEE…KSADKELNKA (63 aa)) constitute a t-SNARE coiled-coil homology domain. A helical; Anchor for type IV membrane protein membrane pass occupies residues 318–338 (VILLLTLCVIALFFFVMLKPH). Over 339–397 (GGGSGGRNNGSNKYNNDDNKTVNNSHDDGSNTHINDEESNLPSIVEVTESENDALDDLL) the chain is Vesicular. The segment at 341 to 397 (GSGGRNNGSNKYNNDDNKTVNNSHDDGSNTHINDEESNLPSIVEVTESENDALDDLL) is disordered. Residues 353 to 374 (NNDDNKTVNNSHDDGSNTHIND) are compositionally biased toward basic and acidic residues. The span at 386–397 (TESENDALDDLL) shows a compositional bias: acidic residues.

The protein belongs to the syntaxin family. Interacts with VPS45.

It localises to the golgi apparatus. Its subcellular location is the trans-Golgi network membrane. It is found in the endosome membrane. T-SNARE that functions in transport from the endosome to the late Golgi and on the endocytic pathway. The chain is t-SNARE affecting a late Golgi compartment protein 2 (TLG2) from Saccharomyces cerevisiae (strain ATCC 204508 / S288c) (Baker's yeast).